The following is a 344-amino-acid chain: MTARGGRAPLARRAVVYGAVGLAAIAGVAMWSGAGRHGGTGASGEPPDASAARGPAAAPPQAAVPASTSLPPSLAGSSAPRLPLDAGGHLAKARAVRDFFDYCLTAQSDLSAAGLDAFVMREIAAQLDGTVAQAEALDVWHRYRAYLDALAKLRDAGAVDKSDLGALQLALDQRASIAYRWLGDWSQPFFGAEQWRQRYDLARLKIAQDPALTDAQKAERLAALEQQMPADERAAQQRVDRQRAAIDQIAQLQKSGATPDAMRAQLTQTLGPEAAARVAQMQQDDASWQRRYADYAAQRAQIESAGLSPQDRDAQIAALRQRVFTKPGEAVRAASLDRGAGSAR.

Residues 14 to 34 (AVVYGAVGLAAIAGVAMWSGA) form a helical membrane-spanning segment. The disordered stretch occupies residues 37–78 (HGGTGASGEPPDASAARGPAAAPPQAAVPASTSLPPSLAGSS). Positions 43-78 (SGEPPDASAARGPAAAPPQAAVPASTSLPPSLAGSS) are enriched in low complexity.

The protein belongs to the lipase chaperone family.

The protein resides in the cell inner membrane. In terms of biological role, may be involved in the folding of the extracellular lipase during its passage through the periplasm. This is Lipase chaperone (lifO) from Burkholderia cepacia (Pseudomonas cepacia).